A 106-amino-acid chain; its full sequence is UPF0145 protein VCM66_A0911 (106 aa).

It belongs to the UPF0145 family.

In Vibrio cholerae serotype O1 (strain M66-2), this protein is UPF0145 protein VCM66_A0911.